The primary structure comprises 160 residues: Large ribosomal subunit protein uL30m (160 aa).

A mitochondrion-targeting transit peptide spans 1 to 34; that stretch reads MAGVLRSVFQRPPGRLQTVKKGAESLIGTEWIRH. The disordered stretch occupies residues 45-64; the sequence is VFQPRPEDHEKYGGDPQNPH.

Belongs to the universal ribosomal protein uL30 family. As to quaternary structure, component of the mitochondrial ribosome large subunit (39S) which comprises a 16S rRNA and about 50 distinct proteins.

Its subcellular location is the mitochondrion. This is Large ribosomal subunit protein uL30m (Mrpl30) from Rattus norvegicus (Rat).